A 398-amino-acid chain; its full sequence is Na(+)/H(+) antiporter NhaA (398 aa).

Transmembrane regions (helical) follow at residues 8–28 (FLQL…LALI), 59–79 (LLLW…GMEI), 96–116 (LPVI…SFII), 124–144 (AGWA…LSLL), 154–174 (VFLL…IALF), 177–197 (AELH…LLML), 202–222 (VMLL…VLKS), 223–243 (GVHA…IRGA), 261–281 (YFIL…GLSW), 292–312 (IIVG…WLAV), 328–348 (LFGL…IGGL), and 362–382 (LGIL…LRNA).

The protein belongs to the NhaA Na(+)/H(+) (TC 2.A.33) antiporter family.

Its subcellular location is the cell inner membrane. The enzyme catalyses Na(+)(in) + 2 H(+)(out) = Na(+)(out) + 2 H(+)(in). Functionally, na(+)/H(+) antiporter that extrudes sodium in exchange for external protons. This chain is Na(+)/H(+) antiporter NhaA, found in Tolumonas auensis (strain DSM 9187 / NBRC 110442 / TA 4).